The chain runs to 349 residues: 2-oxoglutarate and iron-dependent oxygenase domain-containing protein 2 (349 aa).

The 95-residue stretch at 211–305 (DSHRAFVVKY…RWNLILWMRA (95 aa)) folds into the Fe2OG dioxygenase domain. His231, Asp233, and His286 together coordinate Fe cation. Arg296 contacts 2-oxoglutarate.

Belongs to the OGFOD2 family. Fe(2+) is required as a cofactor. It depends on L-ascorbate as a cofactor.

In Xenopus tropicalis (Western clawed frog), this protein is 2-oxoglutarate and iron-dependent oxygenase domain-containing protein 2 (ogfod2).